Reading from the N-terminus, the 185-residue chain is Elongation factor P (185 aa).

Belongs to the elongation factor P family.

The protein localises to the cytoplasm. Its pathway is protein biosynthesis; polypeptide chain elongation. In terms of biological role, involved in peptide bond synthesis. Stimulates efficient translation and peptide-bond synthesis on native or reconstituted 70S ribosomes in vitro. Probably functions indirectly by altering the affinity of the ribosome for aminoacyl-tRNA, thus increasing their reactivity as acceptors for peptidyl transferase. The polypeptide is Elongation factor P (Streptococcus pyogenes serotype M49 (strain NZ131)).